The chain runs to 161 residues: 2-C-methyl-D-erythritol 2,4-cyclodiphosphate synthase (161 aa).

Residues Asp-10 and His-12 each coordinate a divalent metal cation. 4-CDP-2-C-methyl-D-erythritol 2-phosphate contacts are provided by residues 10–12 (DVH) and 36–37 (HS). His-44 is a binding site for a divalent metal cation. Residues 58–60 (DIG), 63–67 (FSDTD), and Arg-144 contribute to the 4-CDP-2-C-methyl-D-erythritol 2-phosphate site.

Belongs to the IspF family. Homotrimer. Requires a divalent metal cation as cofactor.

The catalysed reaction is 4-CDP-2-C-methyl-D-erythritol 2-phosphate = 2-C-methyl-D-erythritol 2,4-cyclic diphosphate + CMP. Its pathway is isoprenoid biosynthesis; isopentenyl diphosphate biosynthesis via DXP pathway; isopentenyl diphosphate from 1-deoxy-D-xylulose 5-phosphate: step 4/6. In terms of biological role, involved in the biosynthesis of isopentenyl diphosphate (IPP) and dimethylallyl diphosphate (DMAPP), two major building blocks of isoprenoid compounds. Catalyzes the conversion of 4-diphosphocytidyl-2-C-methyl-D-erythritol 2-phosphate (CDP-ME2P) to 2-C-methyl-D-erythritol 2,4-cyclodiphosphate (ME-CPP) with a corresponding release of cytidine 5-monophosphate (CMP). The polypeptide is 2-C-methyl-D-erythritol 2,4-cyclodiphosphate synthase (Burkholderia cenocepacia (strain HI2424)).